Consider the following 1218-residue polypeptide: ABC transporter NFT1 (1218 aa).

Topologically, residues 1 to 29 (MIKNGTCPYWERDDLSECARREYIEFKFP) are extracellular. N-linked (GlcNAc...) asparagine glycosylation occurs at Asn-4. The helical transmembrane segment at 30-50 (LFILLTGMIYAFCKVFRAFYL) threads the bilayer. Topologically, residues 51–103 (RGKNHTNEAPEFEEQGNGNHEYARFSVLRLKSAWESRSFCNVNNRSTFDKFKK) are cytoplasmic. The helical transmembrane segment at 104-124 (FIEGAFIVLQLTIHLYILSSM) threads the bilayer. Residues 125-130 (PMDNKK) lie on the Extracellular side of the membrane. Residues 131 to 151 (FFHQGFLVQMFLWILLLVVIT) form a helical membrane-spanning segment. Residues 152 to 169 (LRLISASQSFRWVLACKR) lie on the Cytoplasmic side of the membrane. The helical transmembrane segment at 170–190 (DLWAVSFYSYASLFTLSILPL) threads the bilayer. At 191–201 (RSVFIGKIKDK) the chain is on the extracellular side. Residues 202 to 222 (IMVKYIISETFIDLALLLLLS) traverse the membrane as a helical segment. Over 223–302 (TSSIEGTRYS…SSKKGRLLPN (80 aa)) the chain is Cytoplasmic. A helical membrane pass occupies residues 303-323 (IICYFKAVFISQLFLAFVSSF). One can recognise an ABC transmembrane type-1 1 domain in the interval 311–621 (FISQLFLAFV…IASTVSLLIQ (311 aa)). Residues 324–351 (LNFVPSLLMPRILSYVNDPKSKSWNLVS) lie on the Extracellular side of the membrane. Residues 352 to 374 (LYVSSMLVSKIIATTCRGQGLFL) traverse the membrane as a helical segment. Residues 375–449 (GEKGTMQLRT…VMSIDAFKVS (75 aa)) are Cytoplasmic-facing. Residues 410-434 (NASTSFEENPDSSEAEPRKKSSRKD) form a disordered region. The span at 424 to 434 (AEPRKKSSRKD) shows a compositional bias: basic and acidic residues. A helical transmembrane segment spans residues 450–470 (EAMNTFYLACEAVFMTVTALM). The Extracellular portion of the chain corresponds to 471 to 481 (ILYSLLGWSAF). A helical membrane pass occupies residues 482–504 (AGTFALLAMIPLNFWCATFYGNY). Topologically, residues 505 to 558 (QADQLILTDKRTSGISEALNSIRVIKLLAWENLFYQKIINVRDGEIRLLKKKAT) are cytoplasmic. The chain crosses the membrane as a helical span at residues 559–579 (IFFLNHLIWFFGPTLVSAITF). At 580–584 (SVFIK) the chain is on the extracellular side. The chain crosses the membrane as a helical span at residues 585–605 (FQNQTLTPTIAFTALSLFAIL). Over 606–953 (RTPMDQIAST…KFSAYKWLAD (348 aa)) the chain is Cytoplasmic. The region spanning 651–892 (FGFEDASMEW…NEFLRESINN (242 aa)) is the ABC transporter domain. 686-693 (GPTGSGKS) provides a ligand contact to ATP. The span at 892 to 901 (NDSKNTTHNQ) shows a compositional bias: polar residues. A disordered region spans residues 892–926 (NDSKNTTHNQIDLKRSTTSKKTKNGDPEGGNSQDE). The chain crosses the membrane as a helical span at residues 954-974 (YFGGLGVVFVFTSSSILIHGI). Residues 961 to 1218 (VFVFTSSSIL…SSVMIIMKAS (258 aa)) form the ABC transmembrane type-1 2 domain. Over 975–1013 (TLSQGFWLRYWLDTGSSGSKSTWLYRIVEGHSNIYFLLT) the chain is Extracellular. Residues 1014-1034 (YIIIGLVSSFLTSGKVWIAII) traverse the membrane as a helical segment. Over 1035–1082 (SGTNVTKKIFAKLLSSILYAKLRFHNVTPTGRIMNRFSKDMDIIDQQL) the chain is Cytoplasmic. Residues 1083 to 1105 (IPNFEGLSYSVVVCLWIILLIGY) traverse the membrane as a helical segment. The Extracellular portion of the chain corresponds to 1106 to 1109 (VTPQ). Residues 1110 to 1132 (FLLFAIPLCALYYTVCTLYLRAS) form a helical membrane-spanning segment. Topologically, residues 1133 to 1197 (RELKRIDNIN…NMATEWITYR (65 aa)) are cytoplasmic. A helical transmembrane segment spans residues 1198 to 1218 (VDIIGTLVLFSSSVMIIMKAS).

The protein belongs to the ABC transporter superfamily. ABCC family. Conjugate transporter (TC 3.A.1.208) subfamily.

The protein localises to the membrane. The chain is ABC transporter NFT1 (NFT1) from Saccharomyces cerevisiae (strain ATCC 204508 / S288c) (Baker's yeast).